A 241-amino-acid polypeptide reads, in one-letter code: Uridylate kinase (241 aa).

12–15 (KLSG) is a binding site for ATP. G54 serves as a coordination point for UMP. ATP is bound by residues G55 and R59. UMP-binding positions include D74 and 135 to 142 (VGAPYFTT). 3 residues coordinate ATP: T162, Y168, and D171.

This sequence belongs to the UMP kinase family. As to quaternary structure, homohexamer.

The protein localises to the cytoplasm. It carries out the reaction UMP + ATP = UDP + ADP. It functions in the pathway pyrimidine metabolism; CTP biosynthesis via de novo pathway; UDP from UMP (UMPK route): step 1/1. With respect to regulation, inhibited by UTP. Catalyzes the reversible phosphorylation of UMP to UDP. This Sphingopyxis alaskensis (strain DSM 13593 / LMG 18877 / RB2256) (Sphingomonas alaskensis) protein is Uridylate kinase.